The sequence spans 417 residues: UDP-N-acetylglucosamine 1-carboxyvinyltransferase 3 (417 aa).

22–23 (KN) provides a ligand contact to phosphoenolpyruvate. Arginine 92 contacts UDP-N-acetyl-alpha-D-glucosamine. The active-site Proton donor is the cysteine 116. The residue at position 116 (cysteine 116) is a 2-(S-cysteinyl)pyruvic acid O-phosphothioketal. UDP-N-acetyl-alpha-D-glucosamine-binding positions include 121 to 125 (RPIDQ), aspartate 304, and isoleucine 326.

It belongs to the EPSP synthase family. MurA subfamily.

Its subcellular location is the cytoplasm. It carries out the reaction phosphoenolpyruvate + UDP-N-acetyl-alpha-D-glucosamine = UDP-N-acetyl-3-O-(1-carboxyvinyl)-alpha-D-glucosamine + phosphate. The protein operates within cell wall biogenesis; peptidoglycan biosynthesis. Functionally, cell wall formation. Adds enolpyruvyl to UDP-N-acetylglucosamine. This chain is UDP-N-acetylglucosamine 1-carboxyvinyltransferase 3, found in Caldanaerobacter subterraneus subsp. tengcongensis (strain DSM 15242 / JCM 11007 / NBRC 100824 / MB4) (Thermoanaerobacter tengcongensis).